A 140-amino-acid polypeptide reads, in one-letter code: Nucleoside diphosphate kinase (140 aa).

ATP contacts are provided by Lys9, Phe57, Arg85, Thr91, Arg102, and Asn112. His115 serves as the catalytic Pros-phosphohistidine intermediate.

The protein belongs to the NDK family. In terms of assembly, homotetramer. It depends on Mg(2+) as a cofactor.

The protein localises to the cytoplasm. The catalysed reaction is a 2'-deoxyribonucleoside 5'-diphosphate + ATP = a 2'-deoxyribonucleoside 5'-triphosphate + ADP. It carries out the reaction a ribonucleoside 5'-diphosphate + ATP = a ribonucleoside 5'-triphosphate + ADP. In terms of biological role, major role in the synthesis of nucleoside triphosphates other than ATP. The ATP gamma phosphate is transferred to the NDP beta phosphate via a ping-pong mechanism, using a phosphorylated active-site intermediate. This is Nucleoside diphosphate kinase from Chlorobaculum parvum (strain DSM 263 / NCIMB 8327) (Chlorobium vibrioforme subsp. thiosulfatophilum).